The sequence spans 75 residues: Sec-independent protein translocase protein TatA (75 aa).

Residues 1–21 form a helical membrane-spanning segment; it reads MGSMSIWHWIVVLAVVLLLFG. Residues 43 to 75 form a disordered region; that stretch reads MAEDDDAPAKPAEPPRAVPHQATPAPESEKKAV.

It belongs to the TatA/E family. The Tat system comprises two distinct complexes: a TatABC complex, containing multiple copies of TatA, TatB and TatC subunits, and a separate TatA complex, containing only TatA subunits. Substrates initially bind to the TatABC complex, which probably triggers association of the separate TatA complex to form the active translocon.

It localises to the cell inner membrane. In terms of biological role, part of the twin-arginine translocation (Tat) system that transports large folded proteins containing a characteristic twin-arginine motif in their signal peptide across membranes. TatA could form the protein-conducting channel of the Tat system. This chain is Sec-independent protein translocase protein TatA, found in Azorhizobium caulinodans (strain ATCC 43989 / DSM 5975 / JCM 20966 / LMG 6465 / NBRC 14845 / NCIMB 13405 / ORS 571).